Here is a 127-residue protein sequence, read N- to C-terminus: Biogenesis of lysosome-related organelles complex 1 subunit 2 (127 aa).

The protein belongs to the BLOC1S2 family. As to quaternary structure, component of the biogenesis of lysosome-related organelles complex-1 (BLOC-1). Interacts with BLOS1 and SNX1.

Its subcellular location is the cytoplasm. It is found in the endosome. Functionally, component of the biogenesis of lysosome-related organelles complex-1 (BLOC-1), a complex that mediates the vacuolar degradative transport via the intracellular vesicle trafficking from the endosome to the vacuole. The protein is Biogenesis of lysosome-related organelles complex 1 subunit 2 (BLOS2) of Arabidopsis thaliana (Mouse-ear cress).